The primary structure comprises 487 residues: Diacylglycerol kinase 4 (487 aa).

In terms of domain architecture, DAGKc spans 86 to 242 (TPEVPLMVFV…LDSWNILITM (157 aa)).

This sequence belongs to the eukaryotic diacylglycerol kinase family. In terms of assembly, monomer. Highly expressed in pollen grains. Expressed in roots, hypocotyls, leaf vasculature, developing anthers and stigmas, and receptacles of siliques.

The protein resides in the endoplasmic reticulum. The protein localises to the cytoplasm. It is found in the cytosol. The enzyme catalyses a 1,2-diacyl-sn-glycerol + ATP = a 1,2-diacyl-sn-glycero-3-phosphate + ADP + H(+). Phosphorylates the second messenger diacylglycerol (DAG) to generate phosphatidic acid (PA), another important signaling molecule. PA is required for plant development and responses to abiotic stress and pathogen attack. May be involved in the accumulation of PA during cold stress. Involved in the regulation of PA and phosphatidylcholine biosynthesis in growing pollen tubes. Required for nitric oxide-dependent pollen tube growth and re-orientation responses. Functions together with DGK2 in male gametophyte development and biosynthesis of phosphatidylglycerol and phosphatidylinositol in the endoplasmic reticulum (ER). Involved in PA production for pollen grain growth, as well as leaf and root growth. Possesses guanylyl cyclase activity in vitro. The chain is Diacylglycerol kinase 4 from Arabidopsis thaliana (Mouse-ear cress).